The chain runs to 106 residues: Putative toxin Rv3098A/RVBD_3098A (106 aa).

Belongs to the PemK/MazF family. In terms of assembly, forms a complex with cognate antitoxin Rv3098B/RVBD_3098B.

In terms of biological role, putative toxic component of a possible type II toxin-antitoxin (TA) system. Its toxic effect may be neutralized by cognate antitoxin Rv3098B/RVBD_3098B. The chain is Putative toxin Rv3098A/RVBD_3098A from Mycobacterium tuberculosis (strain ATCC 25618 / H37Rv).